The primary structure comprises 146 residues: MAIYGIGTDIAQVSRVAAVLERTGGRFAEKVLGPDELRVFHARRARSEARGIAFLATRFSAKEAFSKAIGLGMHWPMTWRALQTLNHPSGEPYVVASGELADWLAARGITARVTVSDERDYAVSFVVAETDAAPAPAAAPVSRTSS.

Residues Asp9 and Glu63 each contribute to the Mg(2+) site.

The protein belongs to the P-Pant transferase superfamily. AcpS family. Mg(2+) is required as a cofactor.

It is found in the cytoplasm. The catalysed reaction is apo-[ACP] + CoA = holo-[ACP] + adenosine 3',5'-bisphosphate + H(+). In terms of biological role, transfers the 4'-phosphopantetheine moiety from coenzyme A to a Ser of acyl-carrier-protein. This is Holo-[acyl-carrier-protein] synthase from Burkholderia orbicola (strain MC0-3).